A 321-amino-acid chain; its full sequence is MAEAEAGGDEARCVRLSAERAKLLLAEVDTLLFDCDGVLWRGETAVPGAPETLRALRARGKRLGFITNNSSKTRTAYAEKLRRLGFGGPVGPEAGLEVFGTAYCSALYLRQRLAGVPDPKAYVLGSPALAAELEAVGVTSVGVGPDVLHGDGPSDWLAVPLEPDVRAVVVGFDPHFSYMKLTKAVRYLQQPDCLLVGTNMDNRLPLENGRFIAGTGCLVRAVEMAAQRQADIIGKPSRFIFDCVSQEYGINPERTVMVGDRLDTDILLGSTCSLKTILTLTGVSSLEDVKSNQESDCMFKKKMVPDFYVDSIADLLPALQG.

Residue aspartate 34 is the Nucleophile of the active site. The Mg(2+) site is built by aspartate 34, aspartate 36, and aspartate 260. The active-site Proton donor is the aspartate 36.

Belongs to the HAD-like hydrolase superfamily. CbbY/CbbZ/Gph/YieH family. Homodimer. Requires Mg(2+) as cofactor. In terms of tissue distribution, ubiquitously expressed with higher expression in testis, heart, skeletal muscle and islet tissue (at protein level).

It catalyses the reaction O-phospho-L-tyrosyl-[protein] + H2O = L-tyrosyl-[protein] + phosphate. The enzyme catalyses sn-glycerol 1-phosphate + H2O = glycerol + phosphate. It carries out the reaction sn-glycerol 3-phosphate + H2O = glycerol + phosphate. With respect to regulation, inhibited by orthovanadate, beryllium trifluoride, Ca(2+) and EDTA. Its function is as follows. Glycerol-3-phosphate phosphatase hydrolyzing glycerol-3-phosphate into glycerol. Thereby, regulates the cellular levels of glycerol-3-phosphate a metabolic intermediate of glucose, lipid and energy metabolism. Was also shown to have a 2-phosphoglycolate phosphatase activity and a tyrosine-protein phosphatase activity. However, their physiological relevance is unclear. In vitro, also has a phosphatase activity toward ADP, ATP, GDP and GTP. This Mus musculus (Mouse) protein is Glycerol-3-phosphate phosphatase.